We begin with the raw amino-acid sequence, 200 residues long: Recombination protein RecR (200 aa).

A C4-type zinc finger spans residues 58-75 (CPDCFCLKTSKTSSCDFC). The Toprim domain maps to 82-177 (SFLCIVATPK…KISRLALGMP (96 aa)).

It belongs to the RecR family.

Functionally, may play a role in DNA repair. It seems to be involved in an RecBC-independent recombinational process of DNA repair. It may act with RecF and RecO. The protein is Recombination protein RecR of Chlamydia muridarum (strain MoPn / Nigg).